Consider the following 643-residue polypeptide: 1-deoxy-D-xylulose-5-phosphate synthase (643 aa).

Residues H72 and 113 to 115 contribute to the thiamine diphosphate site; that span reads GHA. D144 serves as a coordination point for Mg(2+). Residues 145 to 146, N174, Y287, and E370 contribute to the thiamine diphosphate site; that span reads GA. Residue N174 coordinates Mg(2+).

The protein belongs to the transketolase family. DXPS subfamily. Homodimer. Mg(2+) serves as cofactor. Requires thiamine diphosphate as cofactor.

The enzyme catalyses D-glyceraldehyde 3-phosphate + pyruvate + H(+) = 1-deoxy-D-xylulose 5-phosphate + CO2. The protein operates within metabolic intermediate biosynthesis; 1-deoxy-D-xylulose 5-phosphate biosynthesis; 1-deoxy-D-xylulose 5-phosphate from D-glyceraldehyde 3-phosphate and pyruvate: step 1/1. Catalyzes the acyloin condensation reaction between C atoms 2 and 3 of pyruvate and glyceraldehyde 3-phosphate to yield 1-deoxy-D-xylulose-5-phosphate (DXP). In Parasynechococcus marenigrum (strain WH8102), this protein is 1-deoxy-D-xylulose-5-phosphate synthase.